Consider the following 403-residue polypeptide: Na(+)-translocating NADH-quinone reductase subunit B (403 aa).

The next 9 membrane-spanning stretches (helical) occupy residues 56–76 (MMII…YNVG), 121–141 (AYFL…EVLF), 164–184 (LPPS…VVLG), 225–245 (GFAG…NILG), 260–280 (GSMG…LLLT), 287–307 (IVAG…AIGS), 312–332 (MFAM…GMIF), 348–368 (WLFG…NPAF), and 371–391 (GMML…HFVV). The residue at position 230 (Thr-230) is an FMN phosphoryl threonine.

This sequence belongs to the NqrB/RnfD family. Composed of six subunits; NqrA, NqrB, NqrC, NqrD, NqrE and NqrF. The cofactor is FMN.

It localises to the cell inner membrane. The enzyme catalyses a ubiquinone + n Na(+)(in) + NADH + H(+) = a ubiquinol + n Na(+)(out) + NAD(+). Functionally, NQR complex catalyzes the reduction of ubiquinone-1 to ubiquinol by two successive reactions, coupled with the transport of Na(+) ions from the cytoplasm to the periplasm. NqrA to NqrE are probably involved in the second step, the conversion of ubisemiquinone to ubiquinol. The chain is Na(+)-translocating NADH-quinone reductase subunit B from Pseudomonas aeruginosa (strain LESB58).